We begin with the raw amino-acid sequence, 475 residues long: MDLVTRRIRGALGIAGPLLFLEGVPRARLGEVVRIRGEPEASGRAAEERSGQVIALSRDRIAVQVLEETRGLAPARSEVTLTGQVARLGVARGMLGRVLDGLGRPADGLPPPVPEARPAIHGAALNVTRREKPSDFIETGVSAIDGMNTLVRGQKLPVFSCAGLPASRLAAQIVCQARVRGGEPFAVVFAAMGSPFREYHAFLEAFRAAGVLDRTVVFLNRAEDPPIERLMTPRCALTCAEHLAFTHGLHVLVVLTDVTSYCEALREVALAREEVPGRRGYPGYMYTDLATIFERAGRVRGRPGSLTQLPVLTMPDDDLTHPIPDLTGYITEGQIVLSRDLDRRGVYPPIDVLPSLSRLMGLGAGPGKTRDDHRPVADQLYAFYARGRDVRRMAAIVGAANLGEEEKRLLAFADAFEDGLVGQGGTFRTIEDTLEAGWRLLSGFPPAALTRIPERLLRARPAQPAAAATSGGAIA.

The protein belongs to the ATPase alpha/beta chains family.

Functionally, produces ATP from ADP in the presence of a proton gradient across the membrane. The V-type beta chain is a regulatory subunit. This is V-type ATP synthase beta chain from Anaeromyxobacter dehalogenans (strain 2CP-C).